The following is a 282-amino-acid chain: MEKIFLNGEFVSPSEAKVSYNDRGYVFGDGIYEYIRVYNGKLFTVTEHYERFLRSANEIGLDLNYSVEELIELSRKLVDMNQIETGVIYIQATRGVAERNHSFPTPEVEPAIVAYTKSYDRPYDHLENGVNGVTVEDIRWLRCDIKSLNLLGNVLAKEYAVKYNAVEAIQHRGETVTEGSSSNAYAIKDGVIYTHPINNYILNGITRIVIKKIAEDYNIPFKEETFTVDFLRNADEVIVSSTSAEVTPVIKLDGEPVNDGKVGPITRQLQEGFEKYIESHSI.

Residue Tyr-32 participates in substrate binding. Residue Arg-51 coordinates pyridoxal 5'-phosphate. Positions 99 and 101 each coordinate substrate. The active-site Proton acceptor is Lys-146. Lys-146 bears the N6-(pyridoxal phosphate)lysine mark. Residue Glu-178 coordinates pyridoxal 5'-phosphate.

This sequence belongs to the class-IV pyridoxal-phosphate-dependent aminotransferase family. In terms of assembly, homodimer. Requires pyridoxal 5'-phosphate as cofactor.

The catalysed reaction is D-alanine + 2-oxoglutarate = D-glutamate + pyruvate. Its function is as follows. Acts on the D-isomers of alanine, leucine, aspartate, glutamate, aminobutyrate, norvaline and asparagine. The enzyme transfers an amino group from a substrate D-amino acid to the pyridoxal phosphate cofactor to form pyridoxamine and an alpha-keto acid in the first half-reaction. The second half-reaction is the reverse of the first, transferring the amino group from the pyridoxamine to a second alpha-keto acid to form the product D-amino acid via a ping-pong mechanism. This is an important process in the formation of D-alanine and D-glutamate, which are essential bacterial cell wall components. The polypeptide is D-alanine aminotransferase (dat) (Staphylococcus aureus (strain MSSA476)).